We begin with the raw amino-acid sequence, 160 residues long: MAVLKKPDLSDPKLRAKLAKGMGHNYYGEPAWPNDLLYVFPVVIMGTIGLVVGLAVLDPGMIGEPADPFATPLEILPEWYLYPVFQILRILPNKLLGIACQAAIPLGLMLIPFIESVNKFQNPFRRPVATTFFMIGTLVTLWLGAGAIFPIDKSLTLGLF.

The next 3 membrane-spanning stretches (helical) occupy residues 36-56 (LLYV…GLAV), 95-115 (LLGI…PFIE), and 131-151 (TFFM…IFPI).

The protein belongs to the cytochrome b family. PetD subfamily. As to quaternary structure, the 4 large subunits of the cytochrome b6-f complex are cytochrome b6, subunit IV (17 kDa polypeptide, PetD), cytochrome f and the Rieske protein, while the 4 small subunits are PetG, PetL, PetM and PetN. The complex functions as a dimer.

It is found in the cellular thylakoid membrane. In terms of biological role, component of the cytochrome b6-f complex, which mediates electron transfer between photosystem II (PSII) and photosystem I (PSI), cyclic electron flow around PSI, and state transitions. This Gloeothece citriformis (strain PCC 7424) (Cyanothece sp. (strain PCC 7424)) protein is Cytochrome b6-f complex subunit 4.